A 142-amino-acid chain; its full sequence is Transcriptional regulator MraZ (142 aa).

SpoVT-AbrB domains lie at alanine 5–valine 51 and alanine 77–arginine 120.

This sequence belongs to the MraZ family. In terms of assembly, forms oligomers.

The protein resides in the cytoplasm. The protein localises to the nucleoid. This Herminiimonas arsenicoxydans protein is Transcriptional regulator MraZ.